The following is a 330-amino-acid chain: Beta-ketoacyl-[acyl-carrier-protein] synthase III (330 aa).

Active-site residues include cysteine 115 and histidine 255. Residues glutamine 256 to arginine 260 form an ACP-binding region. Asparagine 285 is a catalytic residue.

This sequence belongs to the thiolase-like superfamily. FabH family. In terms of assembly, homodimer.

It is found in the cytoplasm. The catalysed reaction is malonyl-[ACP] + acetyl-CoA + H(+) = 3-oxobutanoyl-[ACP] + CO2 + CoA. The protein operates within lipid metabolism; fatty acid biosynthesis. Functionally, catalyzes the condensation reaction of fatty acid synthesis by the addition to an acyl acceptor of two carbons from malonyl-ACP. Catalyzes the first condensation reaction which initiates fatty acid synthesis and may therefore play a role in governing the total rate of fatty acid production. Possesses both acetoacetyl-ACP synthase and acetyl transacylase activities. Its substrate specificity determines the biosynthesis of branched-chain and/or straight-chain of fatty acids. This Symbiobacterium thermophilum (strain DSM 24528 / JCM 14929 / IAM 14863 / T) protein is Beta-ketoacyl-[acyl-carrier-protein] synthase III.